We begin with the raw amino-acid sequence, 263 residues long: Homeobox protein CDX-1 (263 aa).

The disordered stretch occupies residues 47–108; it reads PGINSDPHHG…VQPPGSGLLP (62 aa). Positions 82–97 are enriched in polar residues; it reads SSANPTQIAFSPSDYN. A DNA-binding region (homeobox) is located at residues 150-209; that stretch reads KDKYRVVYTDHQRLELEKEFHYSRYITIRRKAELAAALGLTERQVKIWFQNRRAKERKVN. The segment at 153 to 174 is interaction with DNA; that stretch reads YRVVYTDHQRLELEKEFHYSRY. An interaction with 5-mCpG DNA region spans residues 192–203; it reads RQVKIWFQNRRA. Basic residues predominate over residues 204–213; it reads KERKVNKKKM. The tract at residues 204 to 263 is disordered; the sequence is KERKVNKKKMQQQSQQASTTTPTPPSVGTTAGMGGLCSSSSSNSNLVSPSSMPIKEEYLS. 2 stretches are compositionally biased toward low complexity: residues 214 to 233 and 241 to 254; these read QQQS…VGTT and SSSS…SPSS.

The protein belongs to the Caudal homeobox family.

Its subcellular location is the nucleus. Its function is as follows. Plays a role in transcriptional regulation. Involved in activated KRAS-mediated transcriptional activation of PRKD1. Binds to the PRKD1 promoter. Could play a role in the terminal differentiation of the intestine. Binds preferentially to methylated DNA. The polypeptide is Homeobox protein CDX-1 (cdx1) (Xenopus laevis (African clawed frog)).